The chain runs to 572 residues: E3 ubiquitin-protein ligase ZFP91 (572 aa).

The segment covering 1 to 12 (MPGETEEPRSPE) has biased composition (basic and acidic residues). The disordered stretch occupies residues 1-308 (MPGETEEPRS…PRLPKRRKKP (308 aa)). Positions 61-70 (AAAAAAAAAA) are enriched in low complexity. Positions 72 to 85 (SRRRKAEYPRRRRS) are enriched in basic residues. S86 and S106 each carry phosphoserine. Basic and acidic residues predominate over residues 122–131 (LTTDKDPKEE). Residues 143-162 (SITTTRASRSWRSSSRTSIS) show a composition bias toward low complexity. Residues 209-225 (SDEEEEEEEEMLISEEE) show a composition bias toward acidic residues. Composition is skewed to basic and acidic residues over residues 226–247 (IPFKDDPRDETYKPHLERETPK) and 254–271 (KVKEEKEKKEIKVEVEVE). A compositionally biased stretch (acidic residues) spans 272–284 (VKEEENEIREDEE). 5 C2H2-type zinc fingers span residues 313–338 (VRCEMEGCGTVLAHPRYLQHHIKYQH), 344–368 (YVCPHPSCGRLFRLQKQLLRHAKHH), 374–396 (YICEYCARAFKSSHNLAVHRMIH), 402–424 (LQCEICGFTCRQKASLNWHMKKH), and 432–455 (FSCNICGKKFEKKDSVVAHKAKSH). The segment at 340-370 (LKKKYVCPHPSCGRLFRLQKQLLRHAKHHTD) is interaction with MAP3K14/NIK.

The protein belongs to the krueppel C2H2-type zinc-finger protein family. In terms of assembly, interacts with MAP3K14/NIK. Found in all the examined tissues including brain, heart, kidney, lung, liver, spleen, thymus, skeletal muscle, ovary and testis.

The protein localises to the nucleus. The enzyme catalyses S-ubiquitinyl-[E2 ubiquitin-conjugating enzyme]-L-cysteine + [acceptor protein]-L-lysine = [E2 ubiquitin-conjugating enzyme]-L-cysteine + N(6)-ubiquitinyl-[acceptor protein]-L-lysine.. The protein operates within protein modification; protein ubiquitination. Atypical E3 ubiquitin-protein ligase that mediates 'Lys-63'-linked ubiquitination of MAP3K14/NIK, leading to stabilize and activate MAP3K14/NIK. It thereby acts as an activator of the non-canonical NF-kappa-B2/NFKB2 pathway. May also play an important role in cell proliferation and/or anti-apoptosis. The polypeptide is E3 ubiquitin-protein ligase ZFP91 (Zfp91) (Mus musculus (Mouse)).